A 365-amino-acid chain; its full sequence is 3-isopropylmalate dehydrogenase (365 aa).

78–91 (GYKWDSLPRSQRPE) lines the NAD(+) pocket. Arg-98, Arg-108, Arg-136, and Asp-226 together coordinate substrate. Positions 226, 250, and 254 each coordinate Mg(2+). 284-296 (GSAPDIAGQDKAN) contributes to the NAD(+) binding site.

It belongs to the isocitrate and isopropylmalate dehydrogenases family. LeuB type 1 subfamily. As to quaternary structure, homodimer. It depends on Mg(2+) as a cofactor. Mn(2+) is required as a cofactor.

The protein localises to the cytoplasm. It catalyses the reaction (2R,3S)-3-isopropylmalate + NAD(+) = 4-methyl-2-oxopentanoate + CO2 + NADH. It participates in amino-acid biosynthesis; L-leucine biosynthesis; L-leucine from 3-methyl-2-oxobutanoate: step 3/4. In terms of biological role, catalyzes the oxidation of 3-carboxy-2-hydroxy-4-methylpentanoate (3-isopropylmalate) to 3-carboxy-4-methyl-2-oxopentanoate. The product decarboxylates to 4-methyl-2 oxopentanoate. In Synechococcus elongatus (strain ATCC 33912 / PCC 7942 / FACHB-805) (Anacystis nidulans R2), this protein is 3-isopropylmalate dehydrogenase.